The primary structure comprises 266 residues: MRVTLATIAWMVSFVSNYSHTANILPDIENEDFIKDCVRIHNKFRSEVKPTASDMLYMTWDPALAQIAKAWASNCQFSHNTRLKPPHKLHPNFTSLGENIWTGSVPIFSVSSAITNWYDEIQDYDFKTRICKKVCGHYTQVVWADSYKVGCAVQFCPKVSGFDALSNGAHFICNYGPGGNYPTWPYKRGATCSACPNNDKCLDNLCVNRQRDQVKRYYSVVYPGWPIYPRNRYTSLFLIVNSVILILSVIITILVQHKYPNLVLLD.

A signal peptide spans 1 to 21; the sequence is MRVTLATIAWMVSFVSNYSHT. The region spanning 38-175 is the SCP domain; the sequence is VRIHNKFRSE…SNGAHFICNY (138 aa). The helical transmembrane segment at 233–255 threads the bilayer; that stretch reads YTSLFLIVNSVILILSVIITILV.

It belongs to the CRISP family. According to PubMed:8973356, it is ubiquitously expressed with high levels in lung and kidney and low levels in heart and liver. Highly expressed in cell lines derived from nervous system tumors arising from glia, low or absent in non-glial-derived nervous system tumor cell lines. Also found in fetal kidney. According to PubMed:7607567 it is expressed only in brain tumor glioblastoma multiforme/astrocytoma and not in other nervous system tumors or normal fetal or adult tissues.

The protein localises to the membrane. This is Glioma pathogenesis-related protein 1 (GLIPR1) from Homo sapiens (Human).